The primary structure comprises 145 residues: D-aminoacyl-tRNA deacylase (145 aa).

The Gly-cisPro motif, important for rejection of L-amino acids motif lies at 137–138 (GP).

It belongs to the DTD family. Homodimer.

The protein resides in the cytoplasm. It carries out the reaction glycyl-tRNA(Ala) + H2O = tRNA(Ala) + glycine + H(+). The enzyme catalyses a D-aminoacyl-tRNA + H2O = a tRNA + a D-alpha-amino acid + H(+). In terms of biological role, an aminoacyl-tRNA editing enzyme that deacylates mischarged D-aminoacyl-tRNAs. Also deacylates mischarged glycyl-tRNA(Ala), protecting cells against glycine mischarging by AlaRS. Acts via tRNA-based rather than protein-based catalysis; rejects L-amino acids rather than detecting D-amino acids in the active site. By recycling D-aminoacyl-tRNA to D-amino acids and free tRNA molecules, this enzyme counteracts the toxicity associated with the formation of D-aminoacyl-tRNA entities in vivo and helps enforce protein L-homochirality. The sequence is that of D-aminoacyl-tRNA deacylase from Limosilactobacillus fermentum (strain NBRC 3956 / LMG 18251) (Lactobacillus fermentum).